The sequence spans 446 residues: Glycerol-3-phosphate acyltransferase 3 (446 aa).

3 consecutive transmembrane segments (helical) span residues 11–31, 146–166, and 168–188; these read IFIIWLTLVIVLILLPSMFGS, LRVTLIWVLGLCVRYCILLPL, and ITLATIGISWLVLGATLVGQL. Residues 236–241 carry the HXXXXD motif motif; it reads HTSPID.

Belongs to the 1-acyl-sn-glycerol-3-phosphate acyltransferase family.

The protein localises to the endoplasmic reticulum membrane. The catalysed reaction is sn-glycerol 3-phosphate + an acyl-CoA = a 1-acyl-sn-glycero-3-phosphate + CoA. The enzyme catalyses a 1-acyl-sn-glycero-3-phosphate + an acyl-CoA = a 1,2-diacyl-sn-glycero-3-phosphate + CoA. It carries out the reaction dodecanoyl-CoA + sn-glycerol 3-phosphate = 1-dodecanoyl-sn-glycerol 3-phosphate + CoA. It catalyses the reaction sn-glycerol 3-phosphate + hexadecanoyl-CoA = 1-hexadecanoyl-sn-glycero-3-phosphate + CoA. The catalysed reaction is sn-glycerol 3-phosphate + (9Z)-octadecenoyl-CoA = 1-(9Z-octadecenoyl)-sn-glycero-3-phosphate + CoA. The enzyme catalyses (9Z,12Z)-octadecadienoyl-CoA + sn-glycerol 3-phosphate = 1-(9Z,12Z)-octadecadienoyl-sn-glycero-3-phosphate + CoA. It carries out the reaction 1-tetradecanoyl-sn-glycerol 3-phosphate + (9Z)-octadecenoyl-CoA = 1-tetradecanoyl-2-(9Z)-octadecenoyl-sn-glycero-3-phosphate + CoA. It catalyses the reaction 1-hexadecanoyl-sn-glycero-3-phosphate + (9Z)-octadecenoyl-CoA = 1-hexadecanoyl-2-(9Z-octadecenoyl)-sn-glycero-3-phosphate + CoA. The catalysed reaction is 1-(9Z-octadecenoyl)-sn-glycero-3-phosphate + (9Z)-octadecenoyl-CoA = 1,2-di-(9Z-octadecenoyl)-sn-glycero-3-phosphate + CoA. The enzyme catalyses 1-(6Z,9Z,12Z-octadecatrienoyl)-sn-glycero-3-phosphate + (9Z)-octadecenoyl-CoA = (6Z,9Z,12Z)-octadecatrienoyl-2-(9Z)-octadecenoyl-sn-glycero-3-phosphate + CoA. It carries out the reaction 1-(9Z,12Z,15Z)-octadecatrienoyl-sn-glycero-3-phosphate + (9Z)-octadecenoyl-CoA = 1-(9Z,12Z,15Z)-octadecatrienoyl-2-(9Z)-octadecenoyl-sn-glycero-3-phosphate + CoA. It catalyses the reaction 1-(9Z-octadecenoyl)-sn-glycero-3-phosphate + tetradecanoyl-CoA = 1-(9Z)-octadecenoyl-2-tetradecanoyl-sn-glycero-3-phosphate + CoA. The catalysed reaction is 1-(9Z-octadecenoyl)-sn-glycero-3-phosphate + hexadecanoyl-CoA = 1-(9Z)-octadecenoyl-2-hexadecanoyl-sn-glycero-3-phosphate + CoA. The enzyme catalyses 1-(9Z-octadecenoyl)-sn-glycero-3-phosphate + octadecanoyl-CoA = 1-(9Z-octadecenoyl)-2-octadecanoyl-sn-glycero-3-phosphate + CoA. It carries out the reaction 1-(9Z-octadecenoyl)-sn-glycero-3-phosphate + (9Z,12Z)-octadecadienoyl-CoA = 1-(9Z)-octadecenoyl-2-(9Z,12Z)-octadecadienoyl-sn-glycero-3-phosphate + CoA. It catalyses the reaction 1-(5Z,8Z,11Z,14Z-eicosatetraenoyl)-sn-glycero-3-phosphate + (9Z)-octadecenoyl-CoA = 1-(5Z,8Z,11Z,14Z)-eicosatetraenoyl-2-(9Z)-octadecenoyl-sn-glycero-3-phosphate + CoA. Its pathway is glycerolipid metabolism; triacylglycerol biosynthesis. The protein operates within phospholipid metabolism; CDP-diacylglycerol biosynthesis; CDP-diacylglycerol from sn-glycerol 3-phosphate: step 1/3. Functionally, converts glycerol-3-phosphate to 1-acyl-sn-glycerol-3-phosphate (lysophosphatidic acid or LPA) by incorporating an acyl moiety at the sn-1 position of the glycerol backbone. Also converts LPA into 1,2-diacyl-sn-glycerol-3-phosphate (phosphatidic acid or PA) by incorporating an acyl moiety at the sn-2 position of the glycerol backbone. Protects cells against lipotoxicity. This chain is Glycerol-3-phosphate acyltransferase 3, found in Xenopus laevis (African clawed frog).